Here is a 248-residue protein sequence, read N- to C-terminus: Ribonuclease PH (248 aa).

Phosphate-binding positions include Arg-86 and 124 to 126; that span reads GTR.

The protein belongs to the RNase PH family. Homohexameric ring arranged as a trimer of dimers.

The enzyme catalyses tRNA(n+1) + phosphate = tRNA(n) + a ribonucleoside 5'-diphosphate. Functionally, phosphorolytic 3'-5' exoribonuclease that plays an important role in tRNA 3'-end maturation. Removes nucleotide residues following the 3'-CCA terminus of tRNAs; can also add nucleotides to the ends of RNA molecules by using nucleoside diphosphates as substrates, but this may not be physiologically important. Probably plays a role in initiation of 16S rRNA degradation (leading to ribosome degradation) during starvation. The protein is Ribonuclease PH of Clostridium perfringens (strain ATCC 13124 / DSM 756 / JCM 1290 / NCIMB 6125 / NCTC 8237 / Type A).